We begin with the raw amino-acid sequence, 317 residues long: Gluconeogenesis factor (317 aa).

The protein belongs to the gluconeogenesis factor family.

It localises to the cytoplasm. Functionally, required for morphogenesis under gluconeogenic growth conditions. Required, in gluconeogenic growth conditions, for the correct localization of PBP1 and hence for displaying a normal rod shape. This chain is Gluconeogenesis factor (mgfK), found in Bacillus subtilis (strain 168).